The chain runs to 102 residues: Acid shock protein (102 aa).

The signal sequence occupies residues 1 to 21 (MKKVLALVVAAAMGLSSAAFA). Residues 22-41 (AETATTPAPTATTTKAAPAK) show a composition bias toward low complexity. The propeptide occupies 22–58 (AETATTPAPTATTTKAAPAKTTHHKKQHKAAPAQKAQ). The segment at 22 to 102 (AETATTPAPT…PAKPAAQPAA (81 aa)) is disordered. Basic residues predominate over residues 80 to 90 (AAKKHAGKHSH). Residues 91 to 102 (QQPAKPAAQPAA) show a composition bias toward low complexity.

This sequence belongs to the Asr family. Proteolytic processing gives rise to the active protein.

The protein localises to the periplasm. In terms of biological role, required for growth and/or survival at acidic conditions. The sequence is that of Acid shock protein from Escherichia coli (strain 55989 / EAEC).